The sequence spans 204 residues: Guanylate kinase (204 aa).

One can recognise a Guanylate kinase-like domain in the interval 3-181 (GTLYIVSASS…AVSEMSAIFT (179 aa)). 10–17 (ASSGTGKS) contacts ATP.

It belongs to the guanylate kinase family.

The protein localises to the cytoplasm. The enzyme catalyses GMP + ATP = GDP + ADP. Its function is as follows. Essential for recycling GMP and indirectly, cGMP. This is Guanylate kinase from Xylella fastidiosa (strain Temecula1 / ATCC 700964).